A 248-amino-acid chain; its full sequence is PF03932 family protein CutC (248 aa).

This sequence belongs to the CutC family. As to quaternary structure, homodimer.

Its subcellular location is the cytoplasm. The protein is PF03932 family protein CutC of Escherichia coli O17:K52:H18 (strain UMN026 / ExPEC).